The primary structure comprises 268 residues: Tryptophan synthase alpha chain (268 aa).

Residues Glu-49 and Asp-60 each act as proton acceptor in the active site.

Belongs to the TrpA family. Tetramer of two alpha and two beta chains.

The enzyme catalyses (1S,2R)-1-C-(indol-3-yl)glycerol 3-phosphate + L-serine = D-glyceraldehyde 3-phosphate + L-tryptophan + H2O. Its pathway is amino-acid biosynthesis; L-tryptophan biosynthesis; L-tryptophan from chorismate: step 5/5. In terms of biological role, the alpha subunit is responsible for the aldol cleavage of indoleglycerol phosphate to indole and glyceraldehyde 3-phosphate. This is Tryptophan synthase alpha chain from Vibrio vulnificus (strain CMCP6).